The chain runs to 309 residues: Lipoyl synthase (309 aa).

7 residues coordinate [4Fe-4S] cluster: Cys43, Cys48, Cys54, Cys70, Cys74, Cys77, and Ser283. Positions Ala56–Ser272 constitute a Radical SAM core domain.

It belongs to the radical SAM superfamily. Lipoyl synthase family. Requires [4Fe-4S] cluster as cofactor.

It localises to the cytoplasm. The catalysed reaction is [[Fe-S] cluster scaffold protein carrying a second [4Fe-4S](2+) cluster] + N(6)-octanoyl-L-lysyl-[protein] + 2 oxidized [2Fe-2S]-[ferredoxin] + 2 S-adenosyl-L-methionine + 4 H(+) = [[Fe-S] cluster scaffold protein] + N(6)-[(R)-dihydrolipoyl]-L-lysyl-[protein] + 4 Fe(3+) + 2 hydrogen sulfide + 2 5'-deoxyadenosine + 2 L-methionine + 2 reduced [2Fe-2S]-[ferredoxin]. It participates in protein modification; protein lipoylation via endogenous pathway; protein N(6)-(lipoyl)lysine from octanoyl-[acyl-carrier-protein]. In terms of biological role, catalyzes the radical-mediated insertion of two sulfur atoms into the C-6 and C-8 positions of the octanoyl moiety bound to the lipoyl domains of lipoate-dependent enzymes, thereby converting the octanoylated domains into lipoylated derivatives. The sequence is that of Lipoyl synthase from Shouchella clausii (strain KSM-K16) (Alkalihalobacillus clausii).